Consider the following 118-residue polypeptide: Holo-[acyl-carrier-protein] synthase (118 aa).

Residues Asp5 and Glu50 each contribute to the Mg(2+) site.

Belongs to the P-Pant transferase superfamily. AcpS family. Mg(2+) is required as a cofactor.

The protein localises to the cytoplasm. It catalyses the reaction apo-[ACP] + CoA = holo-[ACP] + adenosine 3',5'-bisphosphate + H(+). Functionally, transfers the 4'-phosphopantetheine moiety from coenzyme A to a Ser of acyl-carrier-protein. The polypeptide is Holo-[acyl-carrier-protein] synthase (Aliarcobacter butzleri (strain RM4018) (Arcobacter butzleri)).